Reading from the N-terminus, the 72-residue chain is Large ribosomal subunit protein bL31 (72 aa).

Zn(2+) is bound by residues Cys16, Cys18, Cys37, and Cys40.

Belongs to the bacterial ribosomal protein bL31 family. Type A subfamily. In terms of assembly, part of the 50S ribosomal subunit. Requires Zn(2+) as cofactor.

Binds the 23S rRNA. This Buchnera aphidicola subsp. Schizaphis graminum (strain Sg) protein is Large ribosomal subunit protein bL31.